The sequence spans 333 residues: GTP 3',8-cyclase (333 aa).

Residues 7 to 221 (KFGRVHDYIR…FEACNEAGYE (215 aa)) enclose the Radical SAM core domain. Arg-16 serves as a coordination point for GTP. Residues Cys-23 and Cys-27 each coordinate [4Fe-4S] cluster. Tyr-29 serves as a coordination point for S-adenosyl-L-methionine. Residue Cys-30 participates in [4Fe-4S] cluster binding. Arg-66 is a binding site for GTP. Gly-70 lines the S-adenosyl-L-methionine pocket. Thr-97 is a GTP binding site. Ser-121 lines the S-adenosyl-L-methionine pocket. Lys-158 contributes to the GTP binding site. S-adenosyl-L-methionine is bound at residue Met-192. Residues Cys-257 and Cys-260 each contribute to the [4Fe-4S] cluster site. Position 262–264 (262–264 (RLR)) interacts with GTP. Residue Cys-274 coordinates [4Fe-4S] cluster.

The protein belongs to the radical SAM superfamily. MoaA family. As to quaternary structure, monomer and homodimer. Requires [4Fe-4S] cluster as cofactor.

The catalysed reaction is GTP + AH2 + S-adenosyl-L-methionine = (8S)-3',8-cyclo-7,8-dihydroguanosine 5'-triphosphate + 5'-deoxyadenosine + L-methionine + A + H(+). The protein operates within cofactor biosynthesis; molybdopterin biosynthesis. Its function is as follows. Catalyzes the cyclization of GTP to (8S)-3',8-cyclo-7,8-dihydroguanosine 5'-triphosphate. This is GTP 3',8-cyclase from Listeria monocytogenes serotype 4b (strain CLIP80459).